The sequence spans 176 residues: NAD(P)H-quinone oxidoreductase subunit I, chloroplastic (176 aa).

2 consecutive 4Fe-4S ferredoxin-type domains span residues 55-84 (GRIH…VDWE) and 95-124 (LNYS…MTEE). [4Fe-4S] cluster contacts are provided by cysteine 64, cysteine 67, cysteine 70, cysteine 74, cysteine 104, cysteine 107, cysteine 110, and cysteine 114.

It belongs to the complex I 23 kDa subunit family. In terms of assembly, NDH is composed of at least 16 different subunits, 5 of which are encoded in the nucleus. The cofactor is [4Fe-4S] cluster.

It is found in the plastid. Its subcellular location is the chloroplast thylakoid membrane. The enzyme catalyses a plastoquinone + NADH + (n+1) H(+)(in) = a plastoquinol + NAD(+) + n H(+)(out). It catalyses the reaction a plastoquinone + NADPH + (n+1) H(+)(in) = a plastoquinol + NADP(+) + n H(+)(out). Functionally, NDH shuttles electrons from NAD(P)H:plastoquinone, via FMN and iron-sulfur (Fe-S) centers, to quinones in the photosynthetic chain and possibly in a chloroplast respiratory chain. The immediate electron acceptor for the enzyme in this species is believed to be plastoquinone. Couples the redox reaction to proton translocation, and thus conserves the redox energy in a proton gradient. The sequence is that of NAD(P)H-quinone oxidoreductase subunit I, chloroplastic from Populus alba (White poplar).